A 294-amino-acid polypeptide reads, in one-letter code: 4-hydroxy-tetrahydrodipicolinate synthase (294 aa).

Thr47 lines the pyruvate pocket. The active-site Proton donor/acceptor is Tyr135. The active-site Schiff-base intermediate with substrate is the Lys163. A pyruvate-binding site is contributed by Thr205.

The protein belongs to the DapA family. As to quaternary structure, homotetramer; dimer of dimers.

The protein resides in the cytoplasm. The enzyme catalyses L-aspartate 4-semialdehyde + pyruvate = (2S,4S)-4-hydroxy-2,3,4,5-tetrahydrodipicolinate + H2O + H(+). Its pathway is amino-acid biosynthesis; L-lysine biosynthesis via DAP pathway; (S)-tetrahydrodipicolinate from L-aspartate: step 3/4. Functionally, catalyzes the condensation of (S)-aspartate-beta-semialdehyde [(S)-ASA] and pyruvate to 4-hydroxy-tetrahydrodipicolinate (HTPA). The polypeptide is 4-hydroxy-tetrahydrodipicolinate synthase (Rickettsia conorii (strain ATCC VR-613 / Malish 7)).